The chain runs to 425 residues: Enolase (425 aa).

Q163 is a (2R)-2-phosphoglycerate binding site. Residue E205 is the Proton donor of the active site. Mg(2+) contacts are provided by D242, E285, and D312. 4 residues coordinate (2R)-2-phosphoglycerate: K337, R366, S367, and K388. K337 functions as the Proton acceptor in the catalytic mechanism.

Belongs to the enolase family. Mg(2+) serves as cofactor.

The protein localises to the cytoplasm. Its subcellular location is the secreted. The protein resides in the cell surface. The enzyme catalyses (2R)-2-phosphoglycerate = phosphoenolpyruvate + H2O. It functions in the pathway carbohydrate degradation; glycolysis; pyruvate from D-glyceraldehyde 3-phosphate: step 4/5. Functionally, catalyzes the reversible conversion of 2-phosphoglycerate (2-PG) into phosphoenolpyruvate (PEP). It is essential for the degradation of carbohydrates via glycolysis. The protein is Enolase of Paracoccus denitrificans (strain Pd 1222).